We begin with the raw amino-acid sequence, 201 residues long: Ciliary microtubule inner protein 2C (201 aa).

The protein belongs to the CIMIP2 family. As to quaternary structure, microtubule inner protein component of sperm flagellar doublet microtubules. Expressed in airway epithelial cells.

The protein localises to the cytoplasm. The protein resides in the cytoskeleton. Its subcellular location is the cilium axoneme. It is found in the flagellum axoneme. Microtubule inner protein (MIP) part of the dynein-decorated doublet microtubules (DMTs) in cilia axoneme, which is required for motile cilia beating. Binds to the intra-tubulin interfaces. The protein is Ciliary microtubule inner protein 2C of Homo sapiens (Human).